A 271-amino-acid polypeptide reads, in one-letter code: Formamidopyrimidine-DNA glycosylase (271 aa).

Catalysis depends on Pro-2, which acts as the Schiff-base intermediate with DNA. Residue Glu-3 is the Proton donor of the active site. Lys-58 serves as the catalytic Proton donor; for beta-elimination activity. Residues His-92, Arg-111, and Lys-152 each coordinate DNA. Residues 237 to 271 (YVYGKVQKPCKICNNTITLIRQNGRSTYFCNACQN) form an FPG-type zinc finger. Arg-261 acts as the Proton donor; for delta-elimination activity in catalysis.

Belongs to the FPG family. As to quaternary structure, monomer. The cofactor is Zn(2+).

It catalyses the reaction Hydrolysis of DNA containing ring-opened 7-methylguanine residues, releasing 2,6-diamino-4-hydroxy-5-(N-methyl)formamidopyrimidine.. The catalysed reaction is 2'-deoxyribonucleotide-(2'-deoxyribose 5'-phosphate)-2'-deoxyribonucleotide-DNA = a 3'-end 2'-deoxyribonucleotide-(2,3-dehydro-2,3-deoxyribose 5'-phosphate)-DNA + a 5'-end 5'-phospho-2'-deoxyribonucleoside-DNA + H(+). Its function is as follows. Involved in base excision repair of DNA damaged by oxidation or by mutagenic agents. Acts as a DNA glycosylase that recognizes and removes damaged bases. Has a preference for oxidized purines, such as 7,8-dihydro-8-oxoguanine (8-oxoG). Has AP (apurinic/apyrimidinic) lyase activity and introduces nicks in the DNA strand. Cleaves the DNA backbone by beta-delta elimination to generate a single-strand break at the site of the removed base with both 3'- and 5'-phosphates. The protein is Formamidopyrimidine-DNA glycosylase of Wolbachia sp. subsp. Brugia malayi (strain TRS).